The primary structure comprises 147 residues: Ubiquitin-conjugating enzyme E2 4 (147 aa).

Positions methionine 1–valine 147 constitute a UBC core domain. The active-site Glycyl thioester intermediate is cysteine 85.

Belongs to the ubiquitin-conjugating enzyme family.

It carries out the reaction S-ubiquitinyl-[E1 ubiquitin-activating enzyme]-L-cysteine + [E2 ubiquitin-conjugating enzyme]-L-cysteine = [E1 ubiquitin-activating enzyme]-L-cysteine + S-ubiquitinyl-[E2 ubiquitin-conjugating enzyme]-L-cysteine.. Its pathway is protein modification; protein ubiquitination. Its function is as follows. E2 ubiquitin-conjugating enzyme that catalyzes the covalent attachment of ubiquitin to other proteins. Mediates the selective degradation of short-lived and abnormal proteins. Mediates ubiquitination of PEX5. The protein is Ubiquitin-conjugating enzyme E2 4 (UBC4) of Candida albicans (Yeast).